The following is a 147-amino-acid chain: Nucleoside diphosphate kinase (147 aa).

6 residues coordinate ATP: Lys9, Phe57, Arg85, Thr91, Arg102, and Asn112. The Pros-phosphohistidine intermediate role is filled by His115.

It belongs to the NDK family. Homotetramer. It depends on Mg(2+) as a cofactor.

Its subcellular location is the cytoplasm. The catalysed reaction is a 2'-deoxyribonucleoside 5'-diphosphate + ATP = a 2'-deoxyribonucleoside 5'-triphosphate + ADP. It catalyses the reaction a ribonucleoside 5'-diphosphate + ATP = a ribonucleoside 5'-triphosphate + ADP. Its function is as follows. Major role in the synthesis of nucleoside triphosphates other than ATP. The ATP gamma phosphate is transferred to the NDP beta phosphate via a ping-pong mechanism, using a phosphorylated active-site intermediate. This is Nucleoside diphosphate kinase from Listeria monocytogenes serotype 4b (strain F2365).